The chain runs to 172 residues: Probable tryptophan transport protein (172 aa).

The next 4 membrane-spanning stretches (helical) occupy residues 7–29, 49–71, 104–126, and 136–158; these read VIMA…FLGG, VQNV…AFPA, AVLT…LLIV, and FAAV…YPIV.

The protein belongs to the vitamin uptake transporter (VUT/ECF) (TC 2.A.88) family. TrpP subfamily.

It is found in the cell membrane. Its function is as follows. Probably involved in tryptophan uptake. The chain is Probable tryptophan transport protein (trpP) from Bacillus subtilis (strain 168).